We begin with the raw amino-acid sequence, 358 residues long: Acyl-CoA desaturase 1 (358 aa).

The Cytoplasmic segment spans residues 1–71; the sequence is MPAHMLQEIS…EGPPPKLEYV (71 aa). Residues 8 to 24 show a composition bias toward low complexity; it reads EISSSYTTTTTITEPPS. The tract at residues 8–33 is disordered; sequence EISSSYTTTTTITEPPSGNLQNGREK. Residues 72–92 traverse the membrane as a helical segment; that stretch reads WRNIILMALLHVGALYGITLI. Asparagine 74 is a binding site for substrate. The Lumenal segment spans residues 93–96; it reads PSSK. A helical membrane pass occupies residues 97-117; the sequence is VYTLLWGIFYYLISALGITAG. At 118–216 the chain is on the cytoplasmic side; that stretch reads AHRLWSHRTY…EKLVMFQRRY (99 aa). Positions 119 and 124 each coordinate Fe cation. The Histidine box-1 motif lies at 119 to 124; that stretch reads HRLWSH. Residues asparagine 147, arginine 154, and aspartate 155 each contribute to the substrate site. Fe cation is bound by residues histidine 156, histidine 159, and histidine 160. Positions 156-160 match the Histidine box-2 motif; the sequence is HRAHH. Substrate contacts are provided by arginine 187 and lysine 188. Residues 217-236 form a helical membrane-spanning segment; the sequence is YKPGLLLMCFILPTLVPWYC. Residues 237-240 are Lumenal-facing; the sequence is WGET. The helical transmembrane segment at 241-262 threads the bilayer; that stretch reads FLHSLFVSTFLRYTLVLNATWL. Residue tryptophan 261 participates in substrate binding. At 263–358 the chain is on the cytoplasmic side; sequence VNSAAHLYGY…RTGDGSHKSS (96 aa). Histidine 268, histidine 297, histidine 300, and histidine 301 together coordinate Fe cation. Residues 297-301 carry the Histidine box-3 motif; it reads HNYHH.

Belongs to the fatty acid desaturase type 1 family. Fe(2+) serves as cofactor. In terms of tissue distribution, detected in liver (at protein level). Detected in adipose tissue. Detected in liver when rats are kept on a fat-free diet, but not when their food contains unsaturated fatty acids.

It localises to the endoplasmic reticulum membrane. The protein resides in the membrane. It catalyses the reaction octadecanoyl-CoA + 2 Fe(II)-[cytochrome b5] + O2 + 2 H(+) = (9Z)-octadecenoyl-CoA + 2 Fe(III)-[cytochrome b5] + 2 H2O. Its function is as follows. Stearoyl-CoA desaturase that utilizes O(2) and electrons from reduced cytochrome b5 to introduce the first double bond into saturated fatty acyl-CoA substrates. Catalyzes the insertion of a cis double bond at the Delta-9 position into fatty acyl-CoA substrates including palmitoyl-CoA and stearoyl-CoA. Gives rise to a mixture of 16:1 and 18:1 unsaturated fatty acids. Plays an important role in lipid biosynthesis. Plays an important role in regulating the expression of genes that are involved in lipogenesis and in regulating mitochondrial fatty acid oxidation. Plays an important role in body energy homeostasis. Contributes to the biosynthesis of membrane phospholipids, cholesterol esters and triglycerides. Required for normal development of sebaceous glands. Required for the biosynthesis of normal levels of Delta-9 unsaturated fatty acids and 1-alkyl-2,3-diacylglycerol in the Harderian gland. Required for normal production of meibum, an oily material that prevents drying of the cornea. In Rattus norvegicus (Rat), this protein is Acyl-CoA desaturase 1 (Scd1).